A 452-amino-acid chain; its full sequence is Phosphoglucosamine mutase (452 aa).

S108 functions as the Phosphoserine intermediate in the catalytic mechanism. 4 residues coordinate Mg(2+): S108, D247, D249, and D251. S108 bears the Phosphoserine mark.

Belongs to the phosphohexose mutase family. It depends on Mg(2+) as a cofactor. Activated by phosphorylation.

It catalyses the reaction alpha-D-glucosamine 1-phosphate = D-glucosamine 6-phosphate. In terms of biological role, catalyzes the conversion of glucosamine-6-phosphate to glucosamine-1-phosphate. This is Phosphoglucosamine mutase from Paraburkholderia phytofirmans (strain DSM 17436 / LMG 22146 / PsJN) (Burkholderia phytofirmans).